The chain runs to 263 residues: Cysteine-rich repeat secretory protein 55 (263 aa).

Positions M1–A20 are cleaved as a signal peptide. 2 consecutive Gnk2-homologous domains span residues D22–F126 and T132–F240.

Belongs to the cysteine-rich repeat secretory protein family.

It is found in the secreted. In Arabidopsis thaliana (Mouse-ear cress), this protein is Cysteine-rich repeat secretory protein 55 (CRRSP55).